A 281-amino-acid polypeptide reads, in one-letter code: Pantothenate synthetase (281 aa).

30 to 37 (MGALHHGH) serves as a coordination point for ATP. Residue His37 is the Proton donor of the active site. Gln61 serves as a coordination point for (R)-pantoate. Gln61 serves as a coordination point for beta-alanine. 147-150 (GEKD) is an ATP binding site. Gln153 is a (R)-pantoate binding site. Residues Leu176 and 184 to 187 (SSSR) each bind ATP.

It belongs to the pantothenate synthetase family. As to quaternary structure, homodimer.

The protein localises to the cytoplasm. The enzyme catalyses (R)-pantoate + beta-alanine + ATP = (R)-pantothenate + AMP + diphosphate + H(+). It functions in the pathway cofactor biosynthesis; (R)-pantothenate biosynthesis; (R)-pantothenate from (R)-pantoate and beta-alanine: step 1/1. In terms of biological role, catalyzes the condensation of pantoate with beta-alanine in an ATP-dependent reaction via a pantoyl-adenylate intermediate. The chain is Pantothenate synthetase from Bartonella bacilliformis (strain ATCC 35685 / KC583 / Herrer 020/F12,63).